The sequence spans 185 residues: Elongation factor P (185 aa).

The protein belongs to the elongation factor P family.

It localises to the cytoplasm. It participates in protein biosynthesis; polypeptide chain elongation. Its function is as follows. Involved in peptide bond synthesis. Stimulates efficient translation and peptide-bond synthesis on native or reconstituted 70S ribosomes in vitro. Probably functions indirectly by altering the affinity of the ribosome for aminoacyl-tRNA, thus increasing their reactivity as acceptors for peptidyl transferase. The polypeptide is Elongation factor P (Lactococcus lactis subsp. cremoris (strain MG1363)).